Here is a 523-residue protein sequence, read N- to C-terminus: Tryptamine 5-hydroxylase (523 aa).

The helical transmembrane segment at 5 to 25 (MASTMSLALLVLSAAYVLVAL) threads the bilayer. C453 provides a ligand contact to heme.

It belongs to the cytochrome P450 family. The cofactor is heme.

It localises to the endoplasmic reticulum membrane. The catalysed reaction is tryptamine + reduced [NADPH--hemoprotein reductase] + O2 = serotonin + oxidized [NADPH--hemoprotein reductase] + H2O + H(+). Involved in serotonin biosynthesis. Catalyzes the conversion of tryptamine to serotonin. Accumulation of serotonin may play a role in innate immunity. This Oryza sativa subsp. japonica (Rice) protein is Tryptamine 5-hydroxylase.